The chain runs to 583 residues: Torsin-1A-interacting protein 1 (583 aa).

Residues 1-12 (MAGDGRRAEAVR) are compositionally biased toward basic and acidic residues. Disordered stretches follow at residues 1 to 254 (MAGD…RSSS) and 271 to 293 (AHDK…WAPQ). The Nuclear segment spans residues 1 to 338 (MAGDGRRAEA…NASFVKRNRW (338 aa)). Serine 60 bears the Phosphoserine mark. Composition is skewed to basic and acidic residues over residues 74 to 101 (VAKE…EVRE) and 115 to 124 (RPQETEEMKT). 2 positions are modified to phosphoserine: serine 135 and serine 143. Methionine 146 is subject to Methionine sulfoxide. Phosphoserine occurs at positions 154, 156, and 157. A compositionally biased stretch (polar residues) spans 165–174 (QTDLSQTISK). 2 positions are modified to phosphoserine: serine 186 and serine 215. Residues 216-225 (EEGETEEDDQ) are compositionally biased toward acidic residues. Threonine 220 bears the Phosphothreonine mark. Phosphoserine occurs at positions 227, 230, and 242. Residues 238-250 (RSRDSDESGDKTT) show a composition bias toward basic and acidic residues. Polar residues predominate over residues 277–287 (SVLSSGYQKTP). Residue methionine 301 is modified to Methionine sulfoxide. Position 305 is a phosphoserine (serine 305). Lysine 308 participates in a covalent cross-link: Glycyl lysine isopeptide (Lys-Gly) (interchain with G-Cter in SUMO2). Phosphoserine occurs at positions 309 and 315. The segment at 309 to 328 (SELGNQSPSTSSRQVTGQPQ) is disordered. The chain crosses the membrane as a helical span at residues 339–355 (WLLPLIAALASGSFWFF). Over 356-583 (STPEVETTAV…ENALKRGICL (228 aa)) the chain is Perinuclear space. Residues 356 to 583 (STPEVETTAV…ENALKRGICL (228 aa)) form an interaction with TOR1A region. Positions 359–435 (EVETTAVQEF…SEQIADAYSS (77 aa)) form a coiled coil. Asparagine 399 carries an N-linked (GlcNAc...) asparagine glycan. The residue at position 552 (methionine 552) is a Methionine sulfoxide.

It belongs to the TOR1AIP family. In terms of assembly, interacts with ATP1B4. Interacts with TOR1A (ATP-bound). Interacts with TOR1B, TOR2A and TOR3A. Interacts with VIM. Post-translationally, phosphorylated. Dephosphorylated at Ser-309 and Ser-315 by serine/threonine-protein phosphatase PP1. As to expression, expressed in muscle, liver and kidney. Major isoform present in liver, brain and heart (at protein level). Expressed at lower levels than isoform 4 in lung, kidney and spleen (at protein level). Similar levels of isoforms 1 and 4 are observed in ovary, testis and pancreas (at protein level). In terms of tissue distribution, expressed at higher levels than isoform 1 in lung, kidney and spleen (at protein level). Expressed at lower levels than isoform 1 in liver, brain and heart (at protein level). Similar levels of isoforms 1 and 4 are observed in ovary, testis and pancreas (at protein level).

It is found in the nucleus inner membrane. The protein resides in the nucleus envelope. Its subcellular location is the nucleus. Its function is as follows. Required for nuclear membrane integrity. Induces TOR1A and TOR1B ATPase activity and is required for their location on the nuclear membrane. Binds to A- and B-type lamins. Possible role in membrane attachment and assembly of the nuclear lamina. The polypeptide is Torsin-1A-interacting protein 1 (TOR1AIP1) (Homo sapiens (Human)).